A 200-amino-acid chain; its full sequence is Ciliary microtubule inner protein 2C (200 aa).

This sequence belongs to the CIMIP2 family. Microtubule inner protein component of sperm flagellar doublet microtubules.

The protein localises to the cytoplasm. It is found in the cytoskeleton. The protein resides in the cilium axoneme. Its subcellular location is the flagellum axoneme. In terms of biological role, microtubule inner protein (MIP) part of the dynein-decorated doublet microtubules (DMTs) in cilia axoneme, which is required for motile cilia beating. Binds to the intra-tubulin interfaces. This Mus musculus (Mouse) protein is Ciliary microtubule inner protein 2C (Cimip2c).